We begin with the raw amino-acid sequence, 487 residues long: Glutamate--tRNA ligase (487 aa).

The short motif at 11–21 (PSPTGYPHLGN) is the 'HIGH' region element. Residues C108, C110, C135, and D137 each coordinate Zn(2+). The 'KMSKS' region motif lies at 245-249 (KLSKR). K248 is an ATP binding site.

This sequence belongs to the class-I aminoacyl-tRNA synthetase family. Glutamate--tRNA ligase type 1 subfamily. Monomer. The cofactor is Zn(2+).

It is found in the cytoplasm. It catalyses the reaction tRNA(Glu) + L-glutamate + ATP = L-glutamyl-tRNA(Glu) + AMP + diphosphate. Functionally, catalyzes the attachment of glutamate to tRNA(Glu) in a two-step reaction: glutamate is first activated by ATP to form Glu-AMP and then transferred to the acceptor end of tRNA(Glu). The sequence is that of Glutamate--tRNA ligase from Dehalococcoides mccartyi (strain ATCC BAA-2100 / JCM 16839 / KCTC 5957 / BAV1).